A 388-amino-acid chain; its full sequence is Protein RMD5 homolog (388 aa).

The region spanning D112–E144 is the LisH domain. Positions S150–E207 constitute a CTLH domain. The segment at C330–C374 adopts an RING-Gid-type zinc-finger fold.

Interacts with RANBPM.

It localises to the cytoplasm. This Arabidopsis thaliana (Mouse-ear cress) protein is Protein RMD5 homolog.